Here is a 150-residue protein sequence, read N- to C-terminus: Small ribosomal subunit protein uS13 (150 aa).

This sequence belongs to the universal ribosomal protein uS13 family. Part of the 30S ribosomal subunit. Forms a loose heterodimer with protein S19. Forms two bridges to the 50S subunit in the 70S ribosome.

Functionally, located at the top of the head of the 30S subunit, it contacts several helices of the 16S rRNA. In the 70S ribosome it contacts the 23S rRNA (bridge B1a) and protein L5 of the 50S subunit (bridge B1b), connecting the 2 subunits; these bridges are implicated in subunit movement. This Aeropyrum pernix (strain ATCC 700893 / DSM 11879 / JCM 9820 / NBRC 100138 / K1) protein is Small ribosomal subunit protein uS13.